A 186-amino-acid polypeptide reads, in one-letter code: Elongation factor P (186 aa).

The protein belongs to the elongation factor P family.

Its subcellular location is the cytoplasm. It participates in protein biosynthesis; polypeptide chain elongation. Functionally, involved in peptide bond synthesis. Stimulates efficient translation and peptide-bond synthesis on native or reconstituted 70S ribosomes in vitro. Probably functions indirectly by altering the affinity of the ribosome for aminoacyl-tRNA, thus increasing their reactivity as acceptors for peptidyl transferase. In Prochlorococcus marinus (strain MIT 9211), this protein is Elongation factor P.